Here is a 297-residue protein sequence, read N- to C-terminus: Pyridoxal 5'-phosphate synthase subunit PdxS (297 aa).

Asp27 is a binding site for D-ribose 5-phosphate. Residue Lys84 is the Schiff-base intermediate with D-ribose 5-phosphate of the active site. Residue Gly156 coordinates D-ribose 5-phosphate. Arg168 contacts D-glyceraldehyde 3-phosphate. D-ribose 5-phosphate is bound by residues Gly217 and Gly238–Ser239.

Belongs to the PdxS/SNZ family. In terms of assembly, in the presence of PdxT, forms a dodecamer of heterodimers.

It catalyses the reaction aldehydo-D-ribose 5-phosphate + D-glyceraldehyde 3-phosphate + L-glutamine = pyridoxal 5'-phosphate + L-glutamate + phosphate + 3 H2O + H(+). It participates in cofactor biosynthesis; pyridoxal 5'-phosphate biosynthesis. Its function is as follows. Catalyzes the formation of pyridoxal 5'-phosphate from ribose 5-phosphate (RBP), glyceraldehyde 3-phosphate (G3P) and ammonia. The ammonia is provided by the PdxT subunit. Can also use ribulose 5-phosphate and dihydroxyacetone phosphate as substrates, resulting from enzyme-catalyzed isomerization of RBP and G3P, respectively. In Corynebacterium diphtheriae (strain ATCC 700971 / NCTC 13129 / Biotype gravis), this protein is Pyridoxal 5'-phosphate synthase subunit PdxS.